We begin with the raw amino-acid sequence, 463 residues long: NF-kappa-B-activating protein (463 aa).

Residues M1–R14 show a composition bias toward basic residues. A disordered region spans residues M1–G358. Composition is skewed to basic and acidic residues over residues R15–T29 and V39–P71. Positions S78–P98 are enriched in low complexity. A compositionally biased stretch (basic and acidic residues) spans K107–Q125. 3 positions are modified to phosphoserine: S136, S189, and S191. T195 is modified (phosphothreonine). Residues P208–S238 are compositionally biased toward basic residues. Low complexity predominate over residues E241–S267. The span at D268–V278 shows a compositional bias: acidic residues. Positions W279–K288 are enriched in basic and acidic residues. Positions K289–K312 are enriched in basic residues. The segment covering K330–E340 has biased composition (basic and acidic residues).

This sequence belongs to the NKAP family.

The protein resides in the nucleus. Tumor suppressor involved in maintaining genome integrity. Influences gene expression and mRNA splicing. This is NF-kappa-B-activating protein from Drosophila melanogaster (Fruit fly).